The following is a 165-amino-acid chain: Lithostathine (165 aa).

An N-terminal signal peptide occupies residues 1–21 (MTRNKYFILLSCLMVLSPSQG). Glutamine 22 is subject to Pyrrolidone carboxylic acid. In terms of domain architecture, C-type lectin spans 33-163 (ITCPEGSNAY…DAQLSFVCKF (131 aa)). Disulfide bonds link cysteine 35/cysteine 46, cysteine 63/cysteine 161, and cysteine 136/cysteine 153. N-linked (GlcNAc...) asparagine glycosylation is present at asparagine 129.

In terms of tissue distribution, expressed only in regenerating islets, but not in normal pancreatic islets, insulinomas or regenerating liver.

It localises to the secreted. In terms of biological role, might act as an inhibitor of spontaneous calcium carbonate precipitation. In Rattus norvegicus (Rat), this protein is Lithostathine (Reg1).